A 270-amino-acid chain; its full sequence is Probable septum site-determining protein MinC (270 aa).

Residues Asp105–Ala129 form a disordered region. Residues Glu116–Ala129 are compositionally biased toward low complexity.

Belongs to the MinC family. As to quaternary structure, interacts with MinD and FtsZ.

Functionally, cell division inhibitor that blocks the formation of polar Z ring septums. Rapidly oscillates between the poles of the cell to destabilize FtsZ filaments that have formed before they mature into polar Z rings. Prevents FtsZ polymerization. In Burkholderia pseudomallei (strain 668), this protein is Probable septum site-determining protein MinC.